A 596-amino-acid chain; its full sequence is DNA mismatch repair protein MutL (596 aa).

It belongs to the DNA mismatch repair MutL/HexB family.

Functionally, this protein is involved in the repair of mismatches in DNA. It is required for dam-dependent methyl-directed DNA mismatch repair. May act as a 'molecular matchmaker', a protein that promotes the formation of a stable complex between two or more DNA-binding proteins in an ATP-dependent manner without itself being part of a final effector complex. The sequence is that of DNA mismatch repair protein MutL from Leptospira borgpetersenii serovar Hardjo-bovis (strain L550).